A 416-amino-acid chain; its full sequence is MSDIVLHEDIPESLLPGGEAAAAATHTVEIDSHALNFGPQHPSAHGVLRLVLEMEGEVVARAIPHIGLLHRGTEKLIEYKTYPKALPYFDRLDYVSPMCEEQAFALATEKLLGIDIPDRAKWIRVMFAEITRILNHILNLTALGLDCGAVTPALWGYEEREKLIEFYEAASGARFHANYFRPGGVSRDLPAGLEDRIAEWARQFPAWIDDLESLLTNNRIWKQRTVGIGIFTTEQALAWGFSGPCLRASGVPWDLRRAQPYDNYDKVEFNIPVARQGDCYDRYLIRVAEMRESVRIVEQCLAQMKPGPIKIQDHKITPPPRREMKRSMEALIHHFKLFTEGYHVPPGATYTAVESPKGEFGVYLVADGSNRPYRCKIRPTGFAHLQAIDEMSRRHMLADAVAIIGSLDLVFGEIDR.

It belongs to the complex I 49 kDa subunit family. In terms of assembly, NDH-1 is composed of 14 different subunits. Subunits NuoB, C, D, E, F, and G constitute the peripheral sector of the complex.

Its subcellular location is the cell inner membrane. The enzyme catalyses a quinone + NADH + 5 H(+)(in) = a quinol + NAD(+) + 4 H(+)(out). In terms of biological role, NDH-1 shuttles electrons from NADH, via FMN and iron-sulfur (Fe-S) centers, to quinones in the respiratory chain. The immediate electron acceptor for the enzyme in this species is believed to be ubiquinone. Couples the redox reaction to proton translocation (for every two electrons transferred, four hydrogen ions are translocated across the cytoplasmic membrane), and thus conserves the redox energy in a proton gradient. In Gluconacetobacter diazotrophicus (strain ATCC 49037 / DSM 5601 / CCUG 37298 / CIP 103539 / LMG 7603 / PAl5), this protein is NADH-quinone oxidoreductase subunit D.